The sequence spans 176 residues: Inner membrane-spanning protein YciB (176 aa).

The next 5 membrane-spanning stretches (helical) occupy residues 23–43 (MIAATAVALVAGVVQAAFLYW), 50–70 (TMQWVGLVLIVVFGGATIVLG), 74–94 (FIMWKPSVLFWLGALFLWGSH), 119–139 (LTYMWVGFLIFMGIANWFVFT), and 150–170 (MFGSTALMLVFFIIQGIYLST).

This sequence belongs to the YciB family.

Its subcellular location is the cell inner membrane. In terms of biological role, plays a role in cell envelope biogenesis, maintenance of cell envelope integrity and membrane homeostasis. This is Inner membrane-spanning protein YciB from Neisseria meningitidis serogroup A / serotype 4A (strain DSM 15465 / Z2491).